The sequence spans 257 residues: Acetylglutamate kinase (257 aa).

Residues 43-44 (GG), R65, and N157 each bind substrate. Residues 180–185 (DVSGIL) and 208–210 (IIT) each bind ATP.

Belongs to the acetylglutamate kinase family. ArgB subfamily. Homodimer.

It is found in the cytoplasm. The enzyme catalyses N-acetyl-L-glutamate + ATP = N-acetyl-L-glutamyl 5-phosphate + ADP. It participates in amino-acid biosynthesis; L-arginine biosynthesis; N(2)-acetyl-L-ornithine from L-glutamate: step 2/4. Its function is as follows. Catalyzes the ATP-dependent phosphorylation of N-acetyl-L-glutamate. The sequence is that of Acetylglutamate kinase from Pectobacterium carotovorum subsp. carotovorum (strain PC1).